Here is a 118-residue protein sequence, read N- to C-terminus: Large ribosomal subunit protein bL17 (118 aa).

The protein belongs to the bacterial ribosomal protein bL17 family. Part of the 50S ribosomal subunit. Contacts protein L32.

This Campylobacter fetus subsp. fetus (strain 82-40) protein is Large ribosomal subunit protein bL17.